The following is a 67-amino-acid chain: Large ribosomal subunit protein uL29 (67 aa).

It belongs to the universal ribosomal protein uL29 family.

This chain is Large ribosomal subunit protein uL29, found in Cereibacter sphaeroides (strain ATCC 17025 / ATH 2.4.3) (Rhodobacter sphaeroides).